Reading from the N-terminus, the 122-residue chain is Cysteine proteinase inhibitor 5 (122 aa).

The N-terminal stretch at 1 to 26 (MTSKVVFLLLLSLVVVLLPLYASAAA) is a signal peptide. The Cystatin domain maps to 29–117 (GGWSPISNVT…RNLTSFEPAN (89 aa)). Residue Asn-36 is glycosylated (N-linked (GlcNAc...) asparagine). The Secondary area of contact motif lies at 72 to 76 (QVVSG). N-linked (GlcNAc...) asparagine glycosylation occurs at Asn-109.

This sequence belongs to the cystatin family. Phytocystatin subfamily.

The protein resides in the secreted. Its function is as follows. Specific inhibitor of cysteine proteinases. Probably involved in the regulation of endogenous processes and in defense against pests and pathogens. This is Cysteine proteinase inhibitor 5 (CYS5) from Arabidopsis thaliana (Mouse-ear cress).